The chain runs to 511 residues: D-alanine--D-alanyl carrier protein ligase (511 aa).

152 to 153 (TS) is an ATP binding site. Residue D199 participates in D-alanine binding. 294–299 (NAYGPT) serves as a coordination point for ATP. Residue V303 participates in D-alanine binding. ATP-binding positions include D385, 397 to 400 (YGGR), and K499. K499 is a D-alanine binding site.

It belongs to the ATP-dependent AMP-binding enzyme family. DltA subfamily.

It is found in the cytoplasm. It carries out the reaction holo-[D-alanyl-carrier protein] + D-alanine + ATP = D-alanyl-[D-alanyl-carrier protein] + AMP + diphosphate. Its pathway is cell wall biogenesis; lipoteichoic acid biosynthesis. Catalyzes the first step in the D-alanylation of lipoteichoic acid (LTA), the activation of D-alanine and its transfer onto the D-alanyl carrier protein (Dcp) DltC. In an ATP-dependent two-step reaction, forms a high energy D-alanyl-AMP intermediate, followed by transfer of the D-alanyl residue as a thiol ester to the phosphopantheinyl prosthetic group of the Dcp. D-alanylation of LTA plays an important role in modulating the properties of the cell wall in Gram-positive bacteria, influencing the net charge of the cell wall. This is D-alanine--D-alanyl carrier protein ligase from Streptococcus agalactiae serotype III (strain NEM316).